We begin with the raw amino-acid sequence, 543 residues long: Hydroxylamine reductase (543 aa).

4 residues coordinate [4Fe-4S] cluster: cysteine 5, cysteine 8, cysteine 17, and cysteine 23. The hybrid [4Fe-2O-2S] cluster site is built by histidine 236, glutamate 260, cysteine 304, cysteine 398, cysteine 426, cysteine 451, glutamate 486, and lysine 488. Residue cysteine 398 is modified to Cysteine persulfide.

The protein belongs to the HCP family. Requires [4Fe-4S] cluster as cofactor. The cofactor is hybrid [4Fe-2O-2S] cluster.

Its subcellular location is the cytoplasm. The enzyme catalyses A + NH4(+) + H2O = hydroxylamine + AH2 + H(+). Catalyzes the reduction of hydroxylamine to form NH(3) and H(2)O. The protein is Hydroxylamine reductase of Bacteroides fragilis (strain ATCC 25285 / DSM 2151 / CCUG 4856 / JCM 11019 / LMG 10263 / NCTC 9343 / Onslow / VPI 2553 / EN-2).